The sequence spans 225 residues: Peroxiredoxin-2E-2, chloroplastic (225 aa).

A chloroplast-targeting transit peptide spans 1 to 42 (MAAPTAAALSTLSTASVTSGKRFITSSFSLSFSSRPLATGVR). One can recognise a Thioredoxin domain in the interval 63 to 225 (IAVGDKLPDA…SSAEEMLKAL (163 aa)). Cys-111 functions as the Cysteine sulfenic acid (-SOH) intermediate in the catalytic mechanism.

The protein belongs to the peroxiredoxin family. Prx5 subfamily. Monomer.

It is found in the plastid. Its subcellular location is the chloroplast stroma. It carries out the reaction [glutaredoxin]-dithiol + a hydroperoxide = [glutaredoxin]-disulfide + an alcohol + H2O. Thiol-specific peroxidase that catalyzes the reduction of hydrogen peroxide and organic hydroperoxides to water and alcohols, respectively. Plays a role in cell protection against oxidative stress by detoxifying peroxides. May be involved in chloroplast redox homeostasis. This is Peroxiredoxin-2E-2, chloroplastic (PRXIIE-2) from Oryza sativa subsp. japonica (Rice).